A 452-amino-acid polypeptide reads, in one-letter code: Lamina-associated polypeptide 2, isoforms beta/delta/epsilon/gamma (452 aa).

The nucleoplasmic stretch occupies residues 1 to 409 (MPEFLEDPSV…KSEKTKKRRS (409 aa)). The region spanning 5–48 (LEDPSVLTKDKLKSELVANNVTLPAGEQRKDVYVQLYLQHLTAR) is the LEM-like domain. Disordered stretches follow at residues 48 to 111 (RNRP…DLDV) and 149 to 263 (REQG…RVET). A linker region spans residues 49 to 108 (NRPPLAAGANSKGPPDFSSDEEREPTPVLGSGASVGRGRGAVGRKATKKTDKPRLEDKDD). Phosphoserine is present on residues S59, S66, and S67. T74 carries the phosphothreonine modification. A phosphoserine mark is found at S79 and S82. Omega-N-methylarginine occurs at positions 85 and 87. Residues 96–105 (KKTDKPRLED) are compositionally biased toward basic and acidic residues. An LEM domain is found at 109–153 (LDVTELSNEELLDQLVRYGVNPGPIVGTTRKLYEKKLLKLREQGT). An NAKAP95-binding N region spans residues 137 to 242 (TRKLYEKKLL…TSGSSTGGPL (106 aa)). Position 153 is a phosphothreonine (T153). Residues 154 to 177 (ESRSSTPLPTVSSSAENTRQNGSN) show a composition bias toward polar residues. Phosphoserine is present on residues S155 and S158. T159 and T163 each carry phosphothreonine. Phosphoserine is present on residues S165, S167, and S176. The span at 178-202 (DSDRYSDNDEDSKIELKLEKREPLK) shows a compositional bias: basic and acidic residues. Position 179 is a phosphoserine; by PKC (S179). S183 and S189 each carry phosphoserine. An N6-acetyllysine modification is found at K206. T210 is subject to Phosphothreonine. A phosphoserine mark is found at S221 and S223. Residues 226-240 (GVTETEWTSGSSTGG) show a composition bias toward low complexity. Phosphoserine is present on residues S249, S253, S264, S291, S305, and S306. The segment at 298-370 (TGNFKHASSI…SCRRPIKGAA (73 aa)) is binds lamins B. The interval 299-373 (GNFKHASSIL…RPIKGAAGRP (75 aa)) is NAKAP95-binding C. The residue at position 311 (T311) is a Phosphothreonine. S314 carries the post-translational modification Phosphoserine. A Citrulline modification is found at R319. A phosphoserine mark is found at S361, S377, and S384. The residue at position 388 (K388) is an N6-acetyllysine. Residue K400 forms a Glycyl lysine isopeptide (Lys-Gly) (interchain with G-Cter in SUMO2) linkage. S401 carries the post-translational modification Phosphoserine. Residues 410–430 (VPMWIKMLLFALVAVFLFLVY) traverse the membrane as a helical; Signal-anchor for type II membrane protein segment. The Lumenal segment spans residues 431-452 (QAMETNQGNPFTNFLQDTKISN).

This sequence belongs to the LEM family. As to quaternary structure, interacts with LMNB1, LMNB2, BANF1, AKAP8L, GMCL and chromosomes. In terms of processing, mitosis-specific phosphorylation specifically abolishes its binding to lamin B and chromosomes. Citrullinated by PADI4.

It localises to the nucleus inner membrane. The protein localises to the chromosome. Functionally, may help direct the assembly of the nuclear lamina and thereby help maintain the structural organization of the nuclear envelope. Possible receptor for attachment of lamin filaments to the inner nuclear membrane. May be involved in the control of initiation of DNA replication through its interaction with NAKAP95. The sequence is that of Lamina-associated polypeptide 2, isoforms beta/delta/epsilon/gamma (Tmpo) from Mus musculus (Mouse).